We begin with the raw amino-acid sequence, 435 residues long: Putative F-box/kelch-repeat protein At1g20790 (435 aa).

The F-box domain maps to 1–49 (MKRLPLHLLDEILFNLDPKSLGKMRCTNKSINTHISDDPNFKFEYFSRI). Kelch repeat units lie at residues 192–238 (PVYV…CTGD) and 280–335 (LYWN…LFKP).

In Arabidopsis thaliana (Mouse-ear cress), this protein is Putative F-box/kelch-repeat protein At1g20790.